An 86-amino-acid chain; its full sequence is Anti-adapter protein IraP (86 aa).

Residues 1 to 47 (MKNLIAELLLKLAQKEEESKELVAQVEALEIIVTAMLRNMAQSEQQM) are a coiled coil.

This sequence belongs to the IraP family. In terms of assembly, interacts with RssB.

It is found in the cytoplasm. Its function is as follows. Inhibits RpoS proteolysis by regulating RssB activity, thereby increasing the stability of the sigma stress factor RpoS especially during phosphate and magnesium starvation, but also in stationary phase and during nitrogen starvation. Its effect on RpoS stability is due to its interaction with RssB, which probably blocks the interaction of RssB with RpoS, and the consequent delivery of the RssB-RpoS complex to the ClpXP protein degradation pathway. In Salmonella arizonae (strain ATCC BAA-731 / CDC346-86 / RSK2980), this protein is Anti-adapter protein IraP.